The primary structure comprises 416 residues: 1-deoxy-D-xylulose 5-phosphate reductoisomerase (416 aa).

Residues T10, G11, S12, I13, G36, R37, N38, and N130 each coordinate NADPH. K131 contributes to the 1-deoxy-D-xylulose 5-phosphate binding site. E132 serves as a coordination point for NADPH. D156 serves as a coordination point for Mn(2+). 1-deoxy-D-xylulose 5-phosphate is bound by residues S157, E158, S194, and H217. Residue E158 participates in Mn(2+) binding. G223 contributes to the NADPH binding site. S230, N235, K236, and E239 together coordinate 1-deoxy-D-xylulose 5-phosphate. E239 contacts Mn(2+).

This sequence belongs to the DXR family. Mg(2+) is required as a cofactor. Mn(2+) serves as cofactor.

It carries out the reaction 2-C-methyl-D-erythritol 4-phosphate + NADP(+) = 1-deoxy-D-xylulose 5-phosphate + NADPH + H(+). Its pathway is isoprenoid biosynthesis; isopentenyl diphosphate biosynthesis via DXP pathway; isopentenyl diphosphate from 1-deoxy-D-xylulose 5-phosphate: step 1/6. Its function is as follows. Catalyzes the NADPH-dependent rearrangement and reduction of 1-deoxy-D-xylulose-5-phosphate (DXP) to 2-C-methyl-D-erythritol 4-phosphate (MEP). The sequence is that of 1-deoxy-D-xylulose 5-phosphate reductoisomerase from Synechococcus sp. (strain CC9311).